Reading from the N-terminus, the 488-residue chain is Alkaline nuclease (488 aa).

This sequence belongs to the herpesviridae alkaline nuclease family. As to quaternary structure, interacts with major DNA-binding protein; this interaction increases the nuclease processivity of the alkaline exonuclease.

The protein resides in the host nucleus. It localises to the host cytoplasm. Functionally, plays a role in processing non linear or branched viral DNA intermediates in order to promote the production of mature packaged unit-length linear progeny viral DNA molecules. Exhibits endonuclease and exonuclease activities and accepts both double-stranded and single-stranded DNA as substrate. Exonuclease digestion of DNA is in the 5'-&gt; 3' direction and the products are 5'-monophosphate nucleosides. Additionally, forms a recombinase with the major DNA-binding protein, which displays strand exchange activity. In Homo sapiens (Human), this protein is Alkaline nuclease (U70).